A 302-amino-acid chain; its full sequence is Protocatechuate 4,5-dioxygenase beta chain (302 aa).

In terms of assembly, composed of two subunits (alpha and beta) in a 1:1 ratio. Fe(2+) is required as a cofactor.

It catalyses the reaction 3,4-dihydroxybenzoate + O2 = 4-carboxy-2-hydroxy-cis,cis-muconate 6-semialdehyde + H(+). Its function is as follows. Responsible for the aromatic ring fission of protocatechuate. This is Protocatechuate 4,5-dioxygenase beta chain (ligB) from Sphingobium sp. (strain NBRC 103272 / SYK-6).